The sequence spans 97 residues: MKAIVFVLIFAVAFAVTLRQGPIVCNLCTGLINTLENLLTTKGADKVKDYIDSLCNKASGFIATLCTKVLDFGVDKLIQLIEDKVDANAICAKIHAC.

The N-terminal stretch at 1–20 (MKAIVFVLIFAVAFAVTLRQ) is a signal peptide. A Saposin B-type domain is found at 21–97 (GPIVCNLCTG…NAICAKIHAC (77 aa)). 3 disulfide bridges follow: Cys25–Cys97, Cys28–Cys91, and Cys55–Cys66.

Monomer. Homodimer. Hexamer; formed during insertion in the membrane.

It is found in the cytoplasmic granule. Functionally, forms pores in the cell membrane of host cells. Implicated in the cytolytic activity of the parasite. Pore forming activity is lower compared to the activity of ameobapore A from the pathogenic strain HM-1:IMSS. The sequence is that of Non-pathogenic pore-forming peptide amoebapore A from Entamoeba histolytica.